We begin with the raw amino-acid sequence, 74 residues long: Defensin J1-2 (74 aa).

An N-terminal signal peptide occupies residues 1–27; it reads MAGFSKVIATIFLMMMLVFATGMVAEA. 4 cysteine pairs are disulfide-bonded: Cys-30-Cys-74, Cys-41-Cys-61, Cys-47-Cys-68, and Cys-51-Cys-70.

The protein belongs to the DEFL family. In terms of assembly, monomer. In terms of tissue distribution, expressed in flowers and in young fruits.

The protein localises to the secreted. Plant defense peptide with antifungal activity against F.oxysporum and B.cinerea. The protein is Defensin J1-2 of Capsicum annuum (Capsicum pepper).